The chain runs to 163 residues: Troponin C, skeletal muscle (163 aa).

A Blocked amino end (Ala) modification is found at Ala2. 4 consecutive EF-hand domains span residues 18–53, 54–89, 94–129, and 130–163; these read EMIA…LGQN, PTKE…QMKE, KSEE…TGEH, and VTEE…EGVQ. Ca(2+)-binding residues include Asp31, Asp33, Asp37, Glu42, Asp67, Asp69, Ser71, Thr73, Glu78, Asp107, Asn109, Asp111, Glu118, Asp143, Asn145, Asp147, Arg149, and Glu154.

The protein belongs to the troponin C family.

Troponin is the central regulatory protein of striated muscle contraction. Tn consists of three components: Tn-I which is the inhibitor of actomyosin ATPase, Tn-T which contains the binding site for tropomyosin and Tn-C. The binding of calcium to Tn-C abolishes the inhibitory action of Tn on actin filaments. This Gallus gallus (Chicken) protein is Troponin C, skeletal muscle (TNNC2).